Reading from the N-terminus, the 268-residue chain is Tryptophan synthase alpha chain (268 aa).

Active-site proton acceptor residues include Glu49 and Asp60.

The protein belongs to the TrpA family. As to quaternary structure, tetramer of two alpha and two beta chains.

It carries out the reaction (1S,2R)-1-C-(indol-3-yl)glycerol 3-phosphate + L-serine = D-glyceraldehyde 3-phosphate + L-tryptophan + H2O. The protein operates within amino-acid biosynthesis; L-tryptophan biosynthesis; L-tryptophan from chorismate: step 5/5. Its function is as follows. The alpha subunit is responsible for the aldol cleavage of indoleglycerol phosphate to indole and glyceraldehyde 3-phosphate. The polypeptide is Tryptophan synthase alpha chain (Xanthomonas axonopodis pv. citri (strain 306)).